The sequence spans 288 residues: METVIENIPPAKPKWLKVKLPIGQKYTELRGLVDKYSLNTICTSGSCPNMGECWGEGTATFMILGNVCTRSCGFCGVKTGRPETVDWDEPEKVARSIKIMNIKHAVITSVDRDDLKDGGSIIWMETVRAIRRMNPNTTLETLIPDFQGIERNIDRIVEANPEVVSHNMETVRRLTREVRIQAKYDRSLEVLRYLKEKGINRTKSGIMLGLGETEEEVYQTMRDLRDANVDVVTIGQYLQPTKKHLPVKEFITPELFAKYEKYGIELGFRHVESGPLVRSSYKAQKHIL.

7 residues coordinate [4Fe-4S] cluster: cysteine 42, cysteine 47, cysteine 53, cysteine 68, cysteine 72, cysteine 75, and serine 280. The Radical SAM core domain maps to 54–269; that stretch reads WGEGTATFMI…EKYGIELGFR (216 aa).

It belongs to the radical SAM superfamily. Lipoyl synthase family. [4Fe-4S] cluster serves as cofactor.

It is found in the cytoplasm. The catalysed reaction is [[Fe-S] cluster scaffold protein carrying a second [4Fe-4S](2+) cluster] + N(6)-octanoyl-L-lysyl-[protein] + 2 oxidized [2Fe-2S]-[ferredoxin] + 2 S-adenosyl-L-methionine + 4 H(+) = [[Fe-S] cluster scaffold protein] + N(6)-[(R)-dihydrolipoyl]-L-lysyl-[protein] + 4 Fe(3+) + 2 hydrogen sulfide + 2 5'-deoxyadenosine + 2 L-methionine + 2 reduced [2Fe-2S]-[ferredoxin]. Its pathway is protein modification; protein lipoylation via endogenous pathway; protein N(6)-(lipoyl)lysine from octanoyl-[acyl-carrier-protein]: step 2/2. In terms of biological role, catalyzes the radical-mediated insertion of two sulfur atoms into the C-6 and C-8 positions of the octanoyl moiety bound to the lipoyl domains of lipoate-dependent enzymes, thereby converting the octanoylated domains into lipoylated derivatives. The chain is Lipoyl synthase from Flavobacterium johnsoniae (strain ATCC 17061 / DSM 2064 / JCM 8514 / BCRC 14874 / CCUG 350202 / NBRC 14942 / NCIMB 11054 / UW101) (Cytophaga johnsonae).